A 238-amino-acid chain; its full sequence is tRNA (guanine-N(7)-)-methyltransferase (238 aa).

Residues E68, E93, D120, and D143 each contribute to the S-adenosyl-L-methionine site. D143 is a catalytic residue. Substrate-binding positions include K147, D179, and 216–219 (TKFE).

This sequence belongs to the class I-like SAM-binding methyltransferase superfamily. TrmB family.

It carries out the reaction guanosine(46) in tRNA + S-adenosyl-L-methionine = N(7)-methylguanosine(46) in tRNA + S-adenosyl-L-homocysteine. It participates in tRNA modification; N(7)-methylguanine-tRNA biosynthesis. Its function is as follows. Catalyzes the formation of N(7)-methylguanine at position 46 (m7G46) in tRNA. This is tRNA (guanine-N(7)-)-methyltransferase from Ectopseudomonas mendocina (strain ymp) (Pseudomonas mendocina).